Here is a 265-residue protein sequence, read N- to C-terminus: Glutamate racemase (265 aa).

Substrate-binding positions include 7-8 and 39-40; these read DS and YG. C71 functions as the Proton donor/acceptor in the catalytic mechanism. Residue 72–73 participates in substrate binding; the sequence is NT. Catalysis depends on C184, which acts as the Proton donor/acceptor. Substrate is bound at residue 185-186; that stretch reads TH.

This sequence belongs to the aspartate/glutamate racemases family.

The catalysed reaction is L-glutamate = D-glutamate. It participates in cell wall biogenesis; peptidoglycan biosynthesis. In terms of biological role, provides the (R)-glutamate required for cell wall biosynthesis. In Sulfurovum sp. (strain NBC37-1), this protein is Glutamate racemase.